A 226-amino-acid polypeptide reads, in one-letter code: Myosin regulatory light chain 10 (226 aa).

EF-hand domains lie at 84–119 (NSPA…LGRI), 154–189 (DPEE…QADR), and 190–225 (FSEE…GEEK). Ca(2+) contacts are provided by Asp97, Asn99, Asp101, and Asp108.

Myosin is a hexamer of 2 heavy chains and 4 light chains.

The polypeptide is Myosin regulatory light chain 10 (MYL10) (Homo sapiens (Human)).